Reading from the N-terminus, the 350-residue chain is NADH-cytochrome b5 reductase 2 (350 aa).

Residues 43–63 (PLVLALGGVAGIGAWYGLGGF) traverse the membrane as a helical segment. Positions 96-204 (DQFVEFTLKE…KGPIAKFAYK (109 aa)) constitute an FAD-binding FR-type domain. 207-242 (EFESIGMIAGGSGITPMYQVIQDIASNPSDKTKVTL) provides a ligand contact to FAD.

This sequence belongs to the flavoprotein pyridine nucleotide cytochrome reductase family. Requires FAD as cofactor.

It localises to the mitochondrion outer membrane. The catalysed reaction is 2 Fe(III)-[cytochrome b5] + NADH = 2 Fe(II)-[cytochrome b5] + NAD(+) + H(+). Functionally, may mediate the reduction of outer membrane cytochrome b5. The chain is NADH-cytochrome b5 reductase 2 (MCR1) from Mycosarcoma maydis (Corn smut fungus).